Consider the following 233-residue polypeptide: Large ribosomal subunit protein uL1 (233 aa).

It belongs to the universal ribosomal protein uL1 family. In terms of assembly, part of the 50S ribosomal subunit.

Its function is as follows. Binds directly to 23S rRNA. The L1 stalk is quite mobile in the ribosome, and is involved in E site tRNA release. In terms of biological role, protein L1 is also a translational repressor protein, it controls the translation of the L11 operon by binding to its mRNA. The sequence is that of Large ribosomal subunit protein uL1 from Deinococcus deserti (strain DSM 17065 / CIP 109153 / LMG 22923 / VCD115).